The chain runs to 508 residues: UTP--glucose-1-phosphate uridylyltransferase (508 aa).

Ser13 is subject to Phosphoserine. Residues 113 to 116, Lys127, Gln190, and Gly222 contribute to the UTP site; that span reads LNGG. Residue 115–116 participates in substrate binding; the sequence is GG. Residue Lys127 coordinates Mg(2+). Residues His223 and 251 to 253 contribute to the substrate site; that span reads NID. 2 residues coordinate UTP: Asp253 and Lys396. Position 253 (Asp253) interacts with Mg(2+). The active site involves Lys396. Thr426 carries the post-translational modification Phosphothreonine. Ser434 carries the phosphoserine modification. The residue at position 438 (Lys438) is an N6-acetyllysine. Ser448 and Ser461 each carry phosphoserine. The oligomerization stretch occupies residues 457–508; it reads HLTVSGDVTFGKNVSLKGTVIIIANHGDRIDIPPGAVLENKIVSGNLRILDH. Residues 502 to 503 are critical for end-to-end subunit interaction; sequence NL.

The protein belongs to the UDPGP type 1 family. As to quaternary structure, homooctamer.

Its subcellular location is the cytoplasm. It carries out the reaction alpha-D-glucose 1-phosphate + UTP + H(+) = UDP-alpha-D-glucose + diphosphate. It participates in glycan biosynthesis; glycogen biosynthesis. UTP--glucose-1-phosphate uridylyltransferase catalyzing the conversion of glucose-1-phosphate into UDP-glucose, a crucial precursor for the production of glycogen. The polypeptide is UTP--glucose-1-phosphate uridylyltransferase (UGP2) (Cricetulus griseus (Chinese hamster)).